The chain runs to 190 residues: Peptidyl-tRNA hydrolase (190 aa).

Phe-14 is a tRNA binding site. His-19 acts as the Proton acceptor in catalysis. Residues Met-64, Asn-66, and Asn-112 each coordinate tRNA.

Belongs to the PTH family. As to quaternary structure, monomer.

Its subcellular location is the cytoplasm. It catalyses the reaction an N-acyl-L-alpha-aminoacyl-tRNA + H2O = an N-acyl-L-amino acid + a tRNA + H(+). In terms of biological role, hydrolyzes ribosome-free peptidyl-tRNAs (with 1 or more amino acids incorporated), which drop off the ribosome during protein synthesis, or as a result of ribosome stalling. Catalyzes the release of premature peptidyl moieties from peptidyl-tRNA molecules trapped in stalled 50S ribosomal subunits, and thus maintains levels of free tRNAs and 50S ribosomes. The chain is Peptidyl-tRNA hydrolase from Staphylococcus haemolyticus (strain JCSC1435).